A 190-amino-acid polypeptide reads, in one-letter code: Lipid A acyltransferase PagP (190 aa).

Positions 1–18 (MKRLISCLTIICALNASA) are cleaved as a signal peptide. Active-site residues include His60, Asp103, and Ser104.

This sequence belongs to the lipid A palmitoyltransferase family. Homodimer.

The protein resides in the cell outer membrane. It carries out the reaction a lipid A + a 1,2-diacyl-sn-glycero-3-phosphocholine = a hepta-acyl lipid A + a 2-acyl-sn-glycero-3-phosphocholine. It catalyses the reaction a lipid IVA + a 1,2-diacyl-sn-glycero-3-phosphocholine = a lipid IVB + a 2-acyl-sn-glycero-3-phosphocholine. The catalysed reaction is a lipid IIA + a 1,2-diacyl-sn-glycero-3-phosphocholine = a lipid IIB + a 2-acyl-sn-glycero-3-phosphocholine. Transfers a fatty acid residue from the sn-1 position of a phospholipid to the N-linked hydroxyfatty acid chain on the proximal unit of lipid A or its precursors. In Legionella pneumophila subsp. pneumophila (strain Philadelphia 1 / ATCC 33152 / DSM 7513), this protein is Lipid A acyltransferase PagP.